Reading from the N-terminus, the 508-residue chain is RanBP-type and C3HC4-type zinc finger-containing protein 1 (508 aa).

Position 1 is an N-acetylmethionine (M1). The segment at 1–218 (MDEKTKKAEE…PGCEMCCRAR (218 aa)) is interaction with IRF3. Residues 1–268 (MDEKTKKAEE…NYLQHVQLEQ (268 aa)) are interaction with TAB2. S50 carries the phosphoserine modification. The 65-residue stretch at 55–119 (IRLCVSVEDA…DQETLHSHGI (65 aa)) folds into the Ubiquitin-like domain. The interaction with RNF31 stretch occupies residues 69–131 (VTIWLTVRPD…NGDSAYLYLL (63 aa)). A disordered region spans residues 161–191 (TLQPRGPLEPVLPKPRTHQETGQPDAAPESP). The RanBP2-type zinc finger occupies 188-220 (PESPPVGWQCPGCTFINKPTRPGCEMCCRARPE). The stretch at 231–260 (DEEERARLAGEEEALRQYEQRKQQQQEGNY) forms a coiled coil. The TRIAD supradomain stretch occupies residues 276–504 (EPAECPVCYS…VNGIPCHPSC (229 aa)). 7 residues coordinate Zn(2+): C280, C283, C298, H300, C303, C306, and C321. The RING-type 1 zinc finger occupies 280–330 (CPVCYSVLAPGEAVVLRECLHTFCRECLQGTIRNSQEAEVSCPFIDNTYSC). At Y328 the chain carries Phosphotyrosine. C330, C369, C374, C389, C392, C397, C400, H404, C409, C445, and C448 together coordinate Zn(2+). An IBR-type zinc finger spans residues 349-409 (QRFLDLGVSI…CKAIHERMNC (61 aa)). The segment at 445 to 474 (CPQCRIVVQKKDGCDWIRCTVCHTEICWVT) adopts an RING-type 2; atypical zinc-finger fold. C458 is a catalytic residue. Positions 463 and 466 each coordinate Zn(2+).

It belongs to the RBR family. Component of the LUBAC complex (linear ubiquitin chain assembly complex) which consists of SHARPIN, RBCK1 and RNF31. LUBAC has a MW of approximately 600 kDa suggesting a heteromultimeric assembly of its subunits. Interacts with beta-I-type (PRKCB1) and zeta-type protein kinase C (PRKCZ). Interacts with UBE2L3. Interacts with IREB2 only in iron-rich conditions. Associates with the TNF-R1 signaling complex (TNF-RSC) in a stimulation-dependent manner. Interacts with EYA1, TAB2, TAB3, MAP3K7 TRAF6 and RIPK1. Interacts with IRF3. In terms of processing, auto-ubiquitinated. Auto-ubiquitination leads to degradation by the proteasome. Phosphorylated. In vitro, phosphorylation inhibits auto-ubiquitination activity. Widely expressed.

It catalyses the reaction [E2 ubiquitin-conjugating enzyme]-S-ubiquitinyl-L-cysteine + [acceptor protein]-L-lysine = [E2 ubiquitin-conjugating enzyme]-L-cysteine + [acceptor protein]-N(6)-ubiquitinyl-L-lysine.. Its pathway is protein modification; protein ubiquitination. Its function is as follows. E3 ubiquitin-protein ligase, which accepts ubiquitin from specific E2 ubiquitin-conjugating enzymes, such as UBE2L3/UBCM4, and then transfers it to substrates. Functions as an E3 ligase for oxidized IREB2 and both heme and oxygen are necessary for IREB2 ubiquitination. Promotes ubiquitination of TAB2 and IRF3 and their degradation by the proteasome. Component of the LUBAC complex which conjugates linear ('Met-1'-linked) polyubiquitin chains to substrates and plays a key role in NF-kappa-B activation and regulation of inflammation. LUBAC conjugates linear polyubiquitin to IKBKG and RIPK1 and is involved in activation of the canonical NF-kappa-B and the JNK signaling pathways. Linear ubiquitination mediated by the LUBAC complex interferes with TNF-induced cell death and thereby prevents inflammation. LUBAC is recruited to the TNF-R1 signaling complex (TNF-RSC) following polyubiquitination of TNF-RSC components by BIRC2 and/or BIRC3 and to conjugate linear polyubiquitin to IKBKG and possibly other components contributing to the stability of the complex. The LUBAC complex is also involved in innate immunity by conjugating linear polyubiquitin chains at the surface of bacteria invading the cytosol to form the ubiquitin coat surrounding bacteria. LUBAC is not able to initiate formation of the bacterial ubiquitin coat, and can only promote formation of linear polyubiquitins on pre-existing ubiquitin. The bacterial ubiquitin coat acts as an 'eat-me' signal for xenophagy and promotes NF-kappa-B activation. Together with OTULIN, the LUBAC complex regulates the canonical Wnt signaling during angiogenesis. Binds polyubiquitin of different linkage types. In Rattus norvegicus (Rat), this protein is RanBP-type and C3HC4-type zinc finger-containing protein 1 (Rbck1).